Consider the following 309-residue polypeptide: Protein RTM1 (309 aa).

The next 7 helical transmembrane spans lie at 22–42 (AIAL…QVVW), 83–103 (TFSA…GYIA), 119–139 (IQAV…YMLF), 162–182 (FFVF…GLMA), 193–213 (LITA…INEF), 233–253 (WWFL…RSIV), and 278–298 (AVPM…GNIF).

Belongs to the lipid-translocating exporter (LTE) (TC 9.A.26.1) family.

It is found in the membrane. Confers resistance to molasses (to a particular toxic element present in some molasses). This chain is Protein RTM1 (RTM1), found in Saccharomyces cerevisiae (Baker's yeast).